Here is a 240-residue protein sequence, read N- to C-terminus: Diglucosylglycerate octanoyltransferase (240 aa).

It belongs to the OctT acyltransferase family. As to quaternary structure, homotetramer.

It catalyses the reaction (2R)-2-O-[alpha-D-glucopyranosyl-(1-&gt;6)-alpha-D-glucopyranosyl]-glycerate + octanoyl-CoA = (2R)-2-O-[6-O-octanoyl-alpha-D-glucopyranosyl-(1-&gt;6)-alpha-D-glucopyranosyl]-glycerate + CoA. Sugar octanoyltransferase likely involved in the biosynthesis of mycobacterial methylglucose lipopolysaccharide (MGLP). Catalyzes the transfer of an octanoyl group from octanoyl-CoA to the C6 OH of the second glucose in diglucosylglycerate (DGG). Can also use hexanoyl-CoA as acyl donor in vitro. DGG is the preferred acceptor, but to a lesser extent, GG (glucosylglycerate) can be used as substrate. DGG and GG are the two earliest intermediates in MGLP biosynthesis. This Mycolicibacterium hassiacum (strain DSM 44199 / CIP 105218 / JCM 12690 / 3849) (Mycobacterium hassiacum) protein is Diglucosylglycerate octanoyltransferase.